The following is a 354-amino-acid chain: Neutral protease 2 homolog MEP3 (354 aa).

A signal peptide spans 1 to 19 (MHFTSSLLALVALTTQALA). Residues 20–179 (FPLNDLPKRD…QSAIPKLEKR (160 aa)) constitute a propeptide that is removed on maturation. 2 disulfide bridges follow: C186–C256 and C263–C281. Position 305 (H305) interacts with Zn(2+). The active site involves E306. Zn(2+)-binding residues include H309 and D320.

Belongs to the peptidase M35 family. Requires Zn(2+) as cofactor.

It localises to the secreted. The catalysed reaction is Preferential cleavage of bonds with hydrophobic residues in P1'. Also 3-Asn-|-Gln-4 and 8-Gly-|-Ser-9 bonds in insulin B chain.. In terms of biological role, secreted metalloproteinase that allows assimilation of proteinaceous substrates. Shows high activities on basic nuclear substrates such as histone and protamine. May be involved in virulence. The chain is Neutral protease 2 homolog MEP3 (MEP3) from Coccidioides posadasii (strain C735) (Valley fever fungus).